The chain runs to 643 residues: Protein cueball (643 aa).

The first 21 residues, 1–21 (MMIWVPALIFLSACLLPRSNG), serve as a signal peptide directing secretion. Residues 22–530 (TPLEWDFAVT…VCQTPFVWTS (509 aa)) are Extracellular-facing. N-linked (GlcNAc...) asparagine glycans are attached at residues Asn77 and Asn103. LDL-receptor class B repeat units lie at residues 116–163 (RNLF…DICR), 164–208 (RKLY…DQLS), and 209–254 (DRLF…TNDA). The N-linked (GlcNAc...) asparagine glycan is linked to Asn172. The segment covering 276–290 (ATTTVRPEVESSTDG) has biased composition (polar residues). The interval 276–303 (ATTTVRPEVESSTDGTESESKQESEPVE) is disordered. A glycan (N-linked (GlcNAc...) asparagine) is linked at Asn312. EGF-like domains are found at residues 363-397 (RMDQ…SRCE), 398-429 (IREC…FTGE), and 432-470 (EVSN…ERCE). 7 disulfides stabilise this stretch: Cys372–Cys385, Cys387–Cys396, Cys401–Cys410, Cys405–Cys420, Cys436–Cys446, Cys440–Cys458, and Cys460–Cys469. Residues Asn472 and Asn507 are each glycosylated (N-linked (GlcNAc...) asparagine). Residues 531-551 (SVIIILVVGIVFSLLLITTII) form a helical membrane-spanning segment. Residues 552–643 (HGIRRLYKPK…LIHNMEDDLY (92 aa)) lie on the Cytoplasmic side of the membrane.

It belongs to the cueball family.

It is found in the cell membrane. Its function is as follows. Has a role in spermatogenesis and oogenesis. This is Protein cueball from Drosophila ananassae (Fruit fly).